The sequence spans 406 residues: NADH-quinone oxidoreductase subunit D (406 aa).

The protein belongs to the complex I 49 kDa subunit family. NDH-1 is composed of 14 different subunits. Subunits NuoB, C, D, E, F, and G constitute the peripheral sector of the complex.

Its subcellular location is the cell inner membrane. It carries out the reaction a quinone + NADH + 5 H(+)(in) = a quinol + NAD(+) + 4 H(+)(out). NDH-1 shuttles electrons from NADH, via FMN and iron-sulfur (Fe-S) centers, to quinones in the respiratory chain. The immediate electron acceptor for the enzyme in this species is believed to be ubiquinone. Couples the redox reaction to proton translocation (for every two electrons transferred, four hydrogen ions are translocated across the cytoplasmic membrane), and thus conserves the redox energy in a proton gradient. This Acidiphilium cryptum (strain JF-5) protein is NADH-quinone oxidoreductase subunit D.